Consider the following 911-residue polypeptide: Protein argonaute 4B (911 aa).

Disordered regions lie at residues 1-51 and 149-171; these read MDAH…RPGL and KTAA…KRVR. The PAZ domain maps to 281–396; sequence PVIDFLLANQ…FPIELCSLIP (116 aa). Positions 565-872 constitute a Piwi domain; the sequence is FLLCLLPERK…AAAQVGTFLK (308 aa).

The protein belongs to the argonaute family. Ago subfamily.

Its function is as follows. Probably involved in the RNA silencing pathway. May bind to short RNAs such as microRNAs (miRNAs) or short interfering RNAs (siRNAs), and represses the translation of mRNAs which are complementary to them. The polypeptide is Protein argonaute 4B (AGO4B) (Oryza sativa subsp. japonica (Rice)).